Here is a 498-residue protein sequence, read N- to C-terminus: MPSPPAMLLGGLLLIVASTTVAQRRGQEAAGRRRAHRVQHGQCSYTFVLPEPEPCPPEPEAFGGSNSLQRDSPAATLNLGDWPSQRMRQLEKMLENNTQWLQKLERYIQVNLRLELAQAQQHMVQNQTATMLELGTSLLTQTTAQTRKLTDVEAQVLNQTSRMEIQLLETSLSTNKLEKQLLLQGHELHRLQGHNSALETRVQALETQQQAELASLSGEKERLRRLLGRQSGALAGLERTLRAASSNSSLLQRQQHQLLESVQRLVRVMAQGPASMRAADQLFQDCAEIQRFGANASGIYTIHVANVTEPRKVFCDMEASGGGWTLIQRRENGSVNFQRNWKDYKQGFGNPAGEHWLGNEVVHQLTSRATYSLRVELQDWEGNEAYAQYEHFQLGSEAQLYRLSLSGYSGSAGRQSSLVLQGTNFSTRDADNDNCLCKCAQMLSGGWWFDACGLSNLNGIYYPARHHVRKLNGIRWHYFQGPSYSLRTTRMMVRPSGI.

The first 22 residues, 1–22, serve as a signal peptide directing secretion; it reads MPSPPAMLLGGLLLIVASTTVA. Residues 51 to 80 are disordered; the sequence is EPEPCPPEPEAFGGSNSLQRDSPAATLNLG. Positions 85–109 form a coiled coil; the sequence is QRMRQLEKMLENNTQWLQKLERYIQ. Asn-96, Asn-126, Asn-158, Asn-247, Asn-295, Asn-306, Asn-332, and Asn-424 each carry an N-linked (GlcNAc...) asparagine glycan. Positions 186-254 form a coiled coil; that stretch reads HELHRLQGHN…SSNSSLLQRQ (69 aa). Positions 277 to 497 constitute a Fibrinogen C-terminal domain; sequence RAADQLFQDC…TTRMMVRPSG (221 aa). Cys-286 and Cys-315 are oxidised to a cystine. Cysteines 439 and 452 form a disulfide.

In terms of assembly, homodimer; disulfide-linked. Interacts with TEK/TIE2.

The protein localises to the secreted. Its function is as follows. Binds to TEK/TIE2, modulating ANGPT1 signaling. Can induce tyrosine phosphorylation of TEK/TIE2. Promotes endothelial cell survival, migration and angiogenesis. The sequence is that of Angiopoietin-4 (ANGPT4) from Bos taurus (Bovine).